The primary structure comprises 126 residues: Aspartate 1-decarboxylase (126 aa).

Ser25 functions as the Schiff-base intermediate with substrate; via pyruvic acid in the catalytic mechanism. Residue Ser25 is modified to Pyruvic acid (Ser). Thr57 provides a ligand contact to substrate. Residue Tyr58 is the Proton donor of the active site. 73 to 75 (GAA) contributes to the substrate binding site.

The protein belongs to the PanD family. In terms of assembly, heterooctamer of four alpha and four beta subunits. It depends on pyruvate as a cofactor. Post-translationally, is synthesized initially as an inactive proenzyme, which is activated by self-cleavage at a specific serine bond to produce a beta-subunit with a hydroxyl group at its C-terminus and an alpha-subunit with a pyruvoyl group at its N-terminus.

It localises to the cytoplasm. The catalysed reaction is L-aspartate + H(+) = beta-alanine + CO2. It participates in cofactor biosynthesis; (R)-pantothenate biosynthesis; beta-alanine from L-aspartate: step 1/1. Its function is as follows. Catalyzes the pyruvoyl-dependent decarboxylation of aspartate to produce beta-alanine. This chain is Aspartate 1-decarboxylase, found in Tolumonas auensis (strain DSM 9187 / NBRC 110442 / TA 4).